We begin with the raw amino-acid sequence, 141 residues long: Nucleoside triphosphatase NudI (141 aa).

Residues 1–141 (MRQRTIVCPL…RHTLALKGLL (141 aa)) enclose the Nudix hydrolase domain. The Nudix box signature appears at 38-59 (GGVEPGERIEEALRREVREELG).

It belongs to the Nudix hydrolase family. NudI subfamily. As to quaternary structure, monomer. Mg(2+) is required as a cofactor.

The catalysed reaction is a ribonucleoside 5'-triphosphate + H2O = a ribonucleoside 5'-phosphate + diphosphate + H(+). The enzyme catalyses a 2'-deoxyribonucleoside 5'-triphosphate + H2O = a 2'-deoxyribonucleoside 5'-phosphate + diphosphate + H(+). It catalyses the reaction dUTP + H2O = dUMP + diphosphate + H(+). It carries out the reaction dTTP + H2O = dTMP + diphosphate + H(+). The catalysed reaction is dCTP + H2O = dCMP + diphosphate + H(+). In terms of biological role, catalyzes the hydrolysis of nucleoside triphosphates, with a preference for pyrimidine deoxynucleoside triphosphates (dUTP, dTTP and dCTP). The sequence is that of Nucleoside triphosphatase NudI from Salmonella agona (strain SL483).